The primary structure comprises 371 residues: UDP-N-acetylglucosamine--N-acetylmuramyl-(pentapeptide) pyrophosphoryl-undecaprenol N-acetylglucosamine transferase (371 aa).

UDP-N-acetyl-alpha-D-glucosamine is bound by residues 15–17 (TGG), Asn-126, Arg-169, Ser-197, and Gln-298.

The protein belongs to the glycosyltransferase 28 family. MurG subfamily.

It is found in the cell inner membrane. It catalyses the reaction di-trans,octa-cis-undecaprenyl diphospho-N-acetyl-alpha-D-muramoyl-L-alanyl-D-glutamyl-meso-2,6-diaminopimeloyl-D-alanyl-D-alanine + UDP-N-acetyl-alpha-D-glucosamine = di-trans,octa-cis-undecaprenyl diphospho-[N-acetyl-alpha-D-glucosaminyl-(1-&gt;4)]-N-acetyl-alpha-D-muramoyl-L-alanyl-D-glutamyl-meso-2,6-diaminopimeloyl-D-alanyl-D-alanine + UDP + H(+). It functions in the pathway cell wall biogenesis; peptidoglycan biosynthesis. In terms of biological role, cell wall formation. Catalyzes the transfer of a GlcNAc subunit on undecaprenyl-pyrophosphoryl-MurNAc-pentapeptide (lipid intermediate I) to form undecaprenyl-pyrophosphoryl-MurNAc-(pentapeptide)GlcNAc (lipid intermediate II). This is UDP-N-acetylglucosamine--N-acetylmuramyl-(pentapeptide) pyrophosphoryl-undecaprenol N-acetylglucosamine transferase from Paramagnetospirillum magneticum (strain ATCC 700264 / AMB-1) (Magnetospirillum magneticum).